The sequence spans 213 residues: Peptidoglycan-N-acetylglucosamine deacetylase BC_3618 (213 aa).

A NodB homology domain is found at Lys-22–Val-203. Asp-29 (proton acceptor) is an active-site residue. The Zn(2+) site is built by Asp-30, His-80, and His-84. His-175 functions as the Proton donor in the catalytic mechanism.

The protein belongs to the polysaccharide deacetylase family. The cofactor is Zn(2+).

It carries out the reaction peptidoglycan-N-acetyl-D-glucosamine + H2O = peptidoglycan-D-glucosamine + acetate.. With respect to regulation, inhibited by CuCl(2) and ZnCl(2). Functionally, catalyzes the deacetylation of N-acetylglucosamine (GlcNAc) residues in peptidoglycan. Also acts on soluble chitin substrates and N-acetylchitooligomers. Acts on cell wall peptidoglycan from the Gram-positive bacteria B.cereus and B.subtilis and the Gram-negative bacterium H.pylori. Not active on acetylated xylan. The protein is Peptidoglycan-N-acetylglucosamine deacetylase BC_3618 of Bacillus cereus (strain ATCC 14579 / DSM 31 / CCUG 7414 / JCM 2152 / NBRC 15305 / NCIMB 9373 / NCTC 2599 / NRRL B-3711).